The primary structure comprises 410 residues: Angiopoietin-related protein 4 (410 aa).

The N-terminal stretch at 1–23 is a signal peptide; it reads MRCAPTAGAALVLCAATAGLLSA. Positions 79–101 are disordered; the sequence is ACQGPKGKDAPFKDSEDRVPEGQ. Positions 84–98 are enriched in basic and acidic residues; that stretch reads KGKDAPFKDSEDRVP. A coiled-coil region spans residues 104–152; that stretch reads ETLQSLQTQLKAQNSKIQQLFQKVAQQQRYLSKQNLRIQNLQSQIDLLA. N-linked (GlcNAc...) asparagine glycosylation occurs at asparagine 181. The Fibrinogen C-terminal domain occupies 183–405; the sequence is THLHRPPRDC…ATTLLIQPME (223 aa). Residues cysteine 192 and cysteine 220 are joined by a disulfide bond. Asparagine 236 and asparagine 242 each carry an N-linked (GlcNAc...) asparagine glycan. Cysteine 345 and cysteine 358 are oxidised to a cystine.

In terms of assembly, homooligomer; disulfide-linked via Cys residues in the N-terminal part of the protein. The homooligomer undergoes proteolytic processing to release the ANGPTL4 C-terminal chain, which circulates as a monomer. The homooligomer unprocessed form is able to interact with the extracellular matrix. N-glycosylated. In terms of processing, forms disulfide-linked dimers and tetramers. Post-translationally, cleaved into a smaller N-terminal chain and a larger chain that contains the fibrinogen C-terminal domain; both cleaved and uncleaved forms are detected in the extracellular space. The cleaved form is not present within the cell. Detected in liver and kidney. Predominantly expressed in adipose tissue and is strongly up-regulated by fasting in white adipose tissue and liver. More abundant in areas of lower flow stress in the inner curvature compared to the outer curvature regions of the aorta (at protein level).

The protein resides in the secreted. It is found in the extracellular space. Its subcellular location is the extracellular matrix. Functionally, mediates inactivation of the lipoprotein lipase LPL, and thereby plays a role in the regulation of triglyceride clearance from the blood serum and in lipid metabolism. May also play a role in regulating glucose homeostasis and insulin sensitivity. Inhibits proliferation, migration, and tubule formation of endothelial cells and reduces vascular leakage. Upon heterologous expression, inhibits the adhesion of endothelial cell to the extracellular matrix (ECM), and inhibits the reorganization of the actin cytoskeleton, formation of actin stress fibers and focal adhesions in endothelial cells that have adhered to ANGPTL4-containing ECM (in vitro). Depending on context, may modulate tumor-related angiogenesis. Its function is as follows. Mediates inactivation of the lipoprotein lipase LPL, and thereby plays an important role in the regulation of triglyceride clearance from the blood serum and in lipid metabolism. Has higher activity in LPL inactivation than the uncleaved protein. In Mus musculus (Mouse), this protein is Angiopoietin-related protein 4 (Angptl4).